A 728-amino-acid chain; its full sequence is Myb-related protein A (728 aa).

Residues 1–31 are disordered; the sequence is MAGRARSEDEEEDGQFTEHDYDVSLQKGPKK. 3 consecutive HTH myb-type domains span residues 30–80, 81–136, and 137–187; these read KKPW…HKVL, SPEL…NPDV, and KKSS…KRKV. 3 DNA-binding regions (H-T-H motif) span residues 57 to 80, 109 to 132, and 160 to 183; these read WGVV…HKVL, WSII…HNHL, and WAEI…NSTM. Residues 230–293 are transcriptional activation domain; that stretch reads IPRYSSLSHD…RKRVPSGSSL (64 aa). Residues 296-534 form a negative regulatory domain region; the sequence is SESYHMGESM…IRRSLMAVTP (239 aa).

As to quaternary structure, component of the DREAM complex.

Its subcellular location is the nucleus. Functionally, transcription factor that specifically recognizes the sequence 5'-YAAC[GT]G-3'. Acts as a master regulator of male meiosis by promoting expression of piRNAs. The piRNA metabolic process mediates the repression of transposable elements during meiosis by forming complexes composed of piRNAs and Piwi proteins and governs the methylation and subsequent repression of transposons, which is essential for the germline integrity. The chain is Myb-related protein A (mybl1) from Xenopus laevis (African clawed frog).